Reading from the N-terminus, the 61-residue chain is MAKKALVNKANKKPKFAVRAYTRCQRCGRPHSVFRKFGLCRICVREMAHAGELPGVHKSSW.

The Zn(2+) site is built by Cys24, Cys27, Cys40, and Cys43.

This sequence belongs to the universal ribosomal protein uS14 family. Zinc-binding uS14 subfamily. Part of the 30S ribosomal subunit. Contacts proteins S3 and S10. Zn(2+) serves as cofactor.

Functionally, binds 16S rRNA, required for the assembly of 30S particles and may also be responsible for determining the conformation of the 16S rRNA at the A site. The polypeptide is Small ribosomal subunit protein uS14B (Rhodococcus jostii (strain RHA1)).